A 336-amino-acid chain; its full sequence is Dihydrolipoyl dehydrogenase (336 aa).

Residues 34-42 (EKEVVGGIC), K51, and G115 contribute to the FAD site. A disulfide bridge links C42 with C47. NAD(+)-binding positions include 180 to 184 (GGGVI), E203, V237, and 264 to 267 (SVGT). D304 and A312 together coordinate FAD.

The protein belongs to the class-I pyridine nucleotide-disulfide oxidoreductase family. In terms of assembly, homodimer. It depends on FAD as a cofactor.

The protein localises to the cytoplasm. The enzyme catalyses N(6)-[(R)-dihydrolipoyl]-L-lysyl-[protein] + NAD(+) = N(6)-[(R)-lipoyl]-L-lysyl-[protein] + NADH + H(+). In terms of biological role, lipoamide dehydrogenase is a component of the alpha-ketoacid dehydrogenase complexes. In Acholeplasma laidlawii, this protein is Dihydrolipoyl dehydrogenase (pdhD).